The sequence spans 158 residues: Ribosome maturation factor RimP (158 aa).

This sequence belongs to the RimP family.

Its subcellular location is the cytoplasm. Required for maturation of 30S ribosomal subunits. This chain is Ribosome maturation factor RimP, found in Pseudomonas savastanoi pv. phaseolicola (strain 1448A / Race 6) (Pseudomonas syringae pv. phaseolicola (strain 1448A / Race 6)).